Here is a 151-residue protein sequence, read N- to C-terminus: Neuroglobin (151 aa).

The 149-residue stretch at 1–149 folds into the Globin domain; sequence MERPEQELIR…VVQAMSRGWD (149 aa). Positions 64 and 96 each coordinate heme b.

The protein belongs to the globin family. Monomer. Homodimer and homotetramer; disulfide-linked. Mainly monomeric but also detected as part of homodimers and homotetramers. Interacts with 14-3-3 proteins; regulates the phosphorylation of NGB. Could interact (ferrous form) with G-alpha(i) proteins (GTP-bound form). Phosphorylated during hypoxia by ERK1/ERK2. Phosphorylation regulates the heme pocket hexacoordination preventing the association of His-64 with the heme metal center. Thereby, promotes the access of dioxygen and nitrite to the heme and stimulates the nitrite reductase activity. Phosphorylation during hypoxia is stabilized by 14-3-3 proteins.

The protein localises to the cytoplasm. It is found in the cytosol. The protein resides in the mitochondrion matrix. It catalyses the reaction Fe(III)-heme b-[protein] + nitric oxide + H2O = Fe(II)-heme b-[protein] + nitrite + 2 H(+). In terms of biological role, monomeric globin with a bis-histidyl six-coordinate heme-iron atom through which it can bind dioxygen, carbon monoxide and nitric oxide. Could help transport oxygen and increase its availability to the metabolically active neuronal tissues, though its low quantity in tissues as well as its high affinity for dioxygen, which may limit its oxygen-releasing ability, argue against it. The ferrous/deoxygenated form exhibits a nitrite reductase activity and it could produce nitric oxide which in turn inhibits cellular respiration in response to hypoxia. In its ferrous/deoxygenated state, it may also exhibit GDI (Guanine nucleotide Dissociation Inhibitor) activity toward heterotrimeric G-alpha proteins, thereby regulating signal transduction to facilitate neuroprotective responses in the wake of hypoxia and associated oxidative stress. In Oryctolagus cuniculus (Rabbit), this protein is Neuroglobin.